The chain runs to 591 residues: L-fucose isomerase (591 aa).

Active-site proton acceptor residues include Glu337 and Asp361. Positions 337, 361, and 528 each coordinate Mn(2+).

The protein belongs to the L-fucose isomerase family. Homohexamer. The cofactor is Mn(2+).

Its subcellular location is the cytoplasm. It carries out the reaction L-fucose = L-fuculose. The protein operates within carbohydrate degradation; L-fucose degradation; L-lactaldehyde and glycerone phosphate from L-fucose: step 1/3. Converts the aldose L-fucose into the corresponding ketose L-fuculose. The chain is L-fucose isomerase from Escherichia coli (strain SMS-3-5 / SECEC).